A 391-amino-acid chain; its full sequence is Mannose-6-phosphate isomerase (391 aa).

Zn(2+) is bound by residues Gln-97, His-99, Glu-134, and His-255. The active site involves Arg-274.

It belongs to the mannose-6-phosphate isomerase type 1 family. It depends on Zn(2+) as a cofactor.

It localises to the cytoplasm. It catalyses the reaction D-mannose 6-phosphate = D-fructose 6-phosphate. Involved in the conversion of glucose to GDP-L-fucose, which can be converted to L-fucose, a capsular polysaccharide. This Salmonella typhimurium (strain LT2 / SGSC1412 / ATCC 700720) protein is Mannose-6-phosphate isomerase (manA).